A 2415-amino-acid polypeptide reads, in one-letter code: Spectrin alpha chain (2415 aa).

9 Spectrin repeats span residues 48-150 (RFQY…KLQQ), 154-254 (LVQF…QEKL), 258-362 (HEIQ…KLDE), 366-464 (LHRF…DRRI), 471-574 (DLQL…LLED), 577-679 (RYQQ…KLNE), 683-784 (QQQF…QHLL), 788-890 (QVQQ…QDLD), and 894-963 (QAHQ…RQQE). In terms of domain architecture, SH3 spans 970–1029 (TGKECVVALYDYTEKSPREVSMKKGDVLTLLNSNNKDWWKVEVNDRQGFVPAAYIKKIDA). Residues Ser-1032 and Ser-1034 each carry the phosphoserine modification. 11 Spectrin repeats span residues 1079-1177 (VREA…ASQL), 1181-1284 (HEVQ…EKLL), 1287-1391 (YDLQ…QLEQ), 1394-1496 (DLQL…SRLG), 1500-1604 (TLQQ…KLKE), 1608-1710 (QRTY…RLNE), 1714-1816 (LHQF…KLDE), 1820-1921 (YQQF…GALL), 1926-2028 (YLQF…DRLL), 2040-2141 (LYLT…DGEL), and 2154-2252 (LRKE…NLEQ). EF-hand domains are found at residues 2265 to 2300 (DSLK…LGYD) and 2308 to 2343 (QPDP…KETE). 10 residues coordinate Ca(2+): Asp-2278, Asp-2280, Ser-2282, Lys-2284, Glu-2289, Asp-2321, Asn-2323, Asp-2325, Tyr-2327, and Glu-2332.

It belongs to the spectrin family. As to quaternary structure, native spectrin molecule is a tetramer composed of two antiparallel heterodimers joined head to head so that each end of the native molecule includes the C-terminus of the alpha subunit and the N-terminus of the beta subunit. Interacts with calmodulin in a calcium-dependent manner, interacts with F-actin and also interacts with Lva. Interacts with Ten-m. As to expression, a substantial pool of maternal protein in the egg undergoes dynamic changes in distribution early in embryogenesis. In gastrulated embryo, the highest level of protein is found in the respiratory tract cells and the lowest in parts of the forming gut.

The protein localises to the cytoplasm. It localises to the cytoskeleton. The protein resides in the golgi apparatus. It is found in the cell projection. Its subcellular location is the cilium. The protein localises to the flagellum. Its function is as follows. Spectrin is the major constituent of the cytoskeletal network underlying the erythrocyte plasma membrane. It associates with band 4.1 and actin to form the cytoskeletal superstructure of the erythrocyte plasma membrane. Essential for larval survival and development. Stabilizes cell to cell interactions that are critical for the maintenance of cell shape and subcellular organization within embryonic tissues. Lva and spectrin may form a Golgi-based scaffold that mediates interaction of Golgi bodies with microtubules and facilitates Golgi-derived membrane secretion required for the formation of furrows during cellularization. This is Spectrin alpha chain (alpha-Spec) from Drosophila melanogaster (Fruit fly).